Consider the following 491-residue polypeptide: Adenylosuccinate synthetase, chloroplastic (491 aa).

GTP-binding positions include 78-84 and 106-108; these read GDEGKGK and GHT. Aspartate 79 acts as the Proton acceptor in catalysis. Mg(2+) contacts are provided by aspartate 79 and glycine 106. Residues 79–82, 104–107, threonine 196, arginine 210, glutamine 290, threonine 305, and arginine 369 contribute to the IMP site; these read DEGK and NAGH. Catalysis depends on histidine 107, which acts as the Proton donor. Position 365–371 (365–371) interacts with substrate; that stretch reads TTTGRPR. GTP-binding positions include arginine 371, 397–399, and 480–482; these read KLD and GIG.

Belongs to the adenylosuccinate synthetase family. As to quaternary structure, homodimer. The cofactor is Mg(2+).

The protein localises to the plastid. Its subcellular location is the chloroplast. It catalyses the reaction IMP + L-aspartate + GTP = N(6)-(1,2-dicarboxyethyl)-AMP + GDP + phosphate + 2 H(+). It functions in the pathway purine metabolism; AMP biosynthesis via de novo pathway; AMP from IMP: step 1/2. Its function is as follows. Plays an important role in the de novo pathway and in the salvage pathway of purine nucleotide biosynthesis. Catalyzes the first committed step in the biosynthesis of AMP from IMP. The polypeptide is Adenylosuccinate synthetase, chloroplastic (Populus trichocarpa (Western balsam poplar)).